We begin with the raw amino-acid sequence, 324 residues long: Glyoxylate/hydroxypyruvate reductase B (324 aa).

Residues Arg-237 and Glu-266 contribute to the active site. His-285 functions as the Proton donor in the catalytic mechanism.

This sequence belongs to the D-isomer specific 2-hydroxyacid dehydrogenase family. GhrB subfamily. As to quaternary structure, homodimer.

It is found in the cytoplasm. The catalysed reaction is glycolate + NADP(+) = glyoxylate + NADPH + H(+). It catalyses the reaction (R)-glycerate + NAD(+) = 3-hydroxypyruvate + NADH + H(+). The enzyme catalyses (R)-glycerate + NADP(+) = 3-hydroxypyruvate + NADPH + H(+). Catalyzes the NADPH-dependent reduction of glyoxylate and hydroxypyruvate into glycolate and glycerate, respectively. In Shigella flexneri, this protein is Glyoxylate/hydroxypyruvate reductase B.